The primary structure comprises 131 residues: Small ribosomal subunit protein uS8 (131 aa).

The protein belongs to the universal ribosomal protein uS8 family. As to quaternary structure, part of the 30S ribosomal subunit. Contacts proteins S5 and S12.

In terms of biological role, one of the primary rRNA binding proteins, it binds directly to 16S rRNA central domain where it helps coordinate assembly of the platform of the 30S subunit. The protein is Small ribosomal subunit protein uS8 of Solibacter usitatus (strain Ellin6076).